The chain runs to 382 residues: Chorismate synthase (382 aa).

The NADP(+) site is built by R39 and R45. Residues 127 to 129 (RAS), 245 to 246 (QA), G290, 305 to 309 (KPIPT), and R331 each bind FMN.

Belongs to the chorismate synthase family. As to quaternary structure, homotetramer. FMNH2 is required as a cofactor.

It carries out the reaction 5-O-(1-carboxyvinyl)-3-phosphoshikimate = chorismate + phosphate. Its pathway is metabolic intermediate biosynthesis; chorismate biosynthesis; chorismate from D-erythrose 4-phosphate and phosphoenolpyruvate: step 7/7. Its function is as follows. Catalyzes the anti-1,4-elimination of the C-3 phosphate and the C-6 proR hydrogen from 5-enolpyruvylshikimate-3-phosphate (EPSP) to yield chorismate, which is the branch point compound that serves as the starting substrate for the three terminal pathways of aromatic amino acid biosynthesis. This reaction introduces a second double bond into the aromatic ring system. This is Chorismate synthase from Desulfitobacterium hafniense (strain DSM 10664 / DCB-2).